The following is a 299-amino-acid chain: tRNA dimethylallyltransferase (299 aa).

Residue 13–20 (GATASGKT) coordinates ATP. Residue 15 to 20 (TASGKT) coordinates substrate. Residues 38–41 (DSRQ) are interaction with substrate tRNA.

The protein belongs to the IPP transferase family. Monomer. Requires Mg(2+) as cofactor.

The enzyme catalyses adenosine(37) in tRNA + dimethylallyl diphosphate = N(6)-dimethylallyladenosine(37) in tRNA + diphosphate. Catalyzes the transfer of a dimethylallyl group onto the adenine at position 37 in tRNAs that read codons beginning with uridine, leading to the formation of N6-(dimethylallyl)adenosine (i(6)A). The protein is tRNA dimethylallyltransferase of Prochlorococcus marinus (strain MIT 9312).